A 351-amino-acid chain; its full sequence is uncharacterized protein (351 aa).

5 residues coordinate Mn(2+): D215, D226, H290, E319, and E333.

Belongs to the peptidase M24B family. Mn(2+) is required as a cofactor.

This is an uncharacterized protein from Staphylococcus aureus (strain USA300).